A 412-amino-acid chain; its full sequence is Eukaryotic initiation factor 4A-1 (412 aa).

Ala2 is subject to N-acetylalanine. The Q motif signature appears at 39-67 (ESFDAMGLQENLLRGIYAYGFEKPSAIQQ). One can recognise a Helicase ATP-binding domain in the interval 70–240 (IVPFCKGLDV…RKFMSKPVRI (171 aa)). 83-90 (AQSGTGKT) contacts ATP. Ser104 carries the post-translational modification Phosphoserine. Phosphothreonine is present on Thr145. The DEAD box signature appears at 188–191 (DEAD). The Helicase C-terminal domain occupies 251–412 (GIKQFYVNVE…ELPSNVADLL (162 aa)).

This sequence belongs to the DEAD box helicase family. eIF4A subfamily. As to quaternary structure, eIF4F is a multi-subunit complex, the composition of which varies with external and internal environmental conditions. It is composed of at least EIF4A, EIF4E and EIF4G. Interacts with CDKA-1. Interacts with MRF1, MRF2, MRF3/ECIP1 and MRF4. In terms of tissue distribution, highly expressed in the whole plant.

The protein localises to the cytoplasm. The enzyme catalyses ATP + H2O = ADP + phosphate + H(+). ATP-dependent RNA helicase which is a subunit of the eIF4F complex involved in cap recognition and is required for mRNA binding to ribosome. In the current model of translation initiation, eIF4A unwinds RNA secondary structures in the 5'-UTR of mRNAs which is necessary to allow efficient binding of the small ribosomal subunit, and subsequent scanning for the initiator codon. In Arabidopsis thaliana (Mouse-ear cress), this protein is Eukaryotic initiation factor 4A-1.